A 387-amino-acid chain; its full sequence is Exodeoxyribonuclease 7 large subunit (387 aa).

The protein belongs to the XseA family. Heterooligomer composed of large and small subunits.

It is found in the cytoplasm. It carries out the reaction Exonucleolytic cleavage in either 5'- to 3'- or 3'- to 5'-direction to yield nucleoside 5'-phosphates.. Bidirectionally degrades single-stranded DNA into large acid-insoluble oligonucleotides, which are then degraded further into small acid-soluble oligonucleotides. The polypeptide is Exodeoxyribonuclease 7 large subunit (Campylobacter jejuni subsp. jejuni serotype O:2 (strain ATCC 700819 / NCTC 11168)).